Reading from the N-terminus, the 158-residue chain is Flagellar assembly factor FliW (158 aa).

Belongs to the FliW family. In terms of assembly, interacts with translational regulator CsrA and flagellin(s).

It localises to the cytoplasm. In terms of biological role, acts as an anti-CsrA protein, binds CsrA and prevents it from repressing translation of its target genes, one of which is flagellin. Binds to flagellin and participates in the assembly of the flagellum. The chain is Flagellar assembly factor FliW from Syntrophus aciditrophicus (strain SB).